A 346-amino-acid chain; its full sequence is Uroporphyrinogen decarboxylase (346 aa).

Substrate-binding positions include 26–30, D76, Y153, S208, and H323; that span reads RQAGR.

It belongs to the uroporphyrinogen decarboxylase family. As to quaternary structure, homodimer.

The protein resides in the cytoplasm. The enzyme catalyses uroporphyrinogen III + 4 H(+) = coproporphyrinogen III + 4 CO2. It functions in the pathway porphyrin-containing compound metabolism; protoporphyrin-IX biosynthesis; coproporphyrinogen-III from 5-aminolevulinate: step 4/4. Functionally, catalyzes the decarboxylation of four acetate groups of uroporphyrinogen-III to yield coproporphyrinogen-III. The sequence is that of Uroporphyrinogen decarboxylase from Prochlorococcus marinus (strain MIT 9312).